The following is a 240-amino-acid chain: Homeobox-leucine zipper protein HOX14 (240 aa).

A disordered region spans residues 26 to 64 (SGEVQGERPRARRRRRRGARCVGGGGGGGEVDGGDPKKR). Positions 35-44 (RARRRRRRGA) are enriched in basic residues. Positions 46–56 (CVGGGGGGGEV) are enriched in gly residues. Positions 59–118 (GDPKKRRLSDEQVEMLELSFREERKLETGRKVHLASELGLDPKQVAVWFQNRRARHKSKL) form a DNA-binding region, homeobox. The stretch at 108 to 167 (QNRRARHKSKLLEEEFSKLKHAHDAAILHKCHLENEVLRLKERLVVAEEEVRRLRSAAGS) forms a coiled coil.

It belongs to the HD-ZIP homeobox family. Class I subfamily. In terms of tissue distribution, expressed in roots, stems, leaf blades and panicles.

It is found in the nucleus. Probable transcription factor. This Oryza sativa subsp. japonica (Rice) protein is Homeobox-leucine zipper protein HOX14 (HOX14).